Reading from the N-terminus, the 407-residue chain is tRNA pseudouridine synthase Pus10 (407 aa).

Asp232 acts as the Nucleophile in catalysis. Substrate contacts are provided by Tyr300 and Tyr369.

This sequence belongs to the pseudouridine synthase Pus10 family.

It carries out the reaction uridine(54) in tRNA = pseudouridine(54) in tRNA. The enzyme catalyses uridine(55) in tRNA = pseudouridine(55) in tRNA. Functionally, responsible for synthesis of pseudouridine from uracil-54 and uracil-55 in the psi GC loop of transfer RNAs. The protein is tRNA pseudouridine synthase Pus10 of Methanosphaera stadtmanae (strain ATCC 43021 / DSM 3091 / JCM 11832 / MCB-3).